The chain runs to 728 residues: Cellulose synthase-like protein E6 (728 aa).

The next 2 helical transmembrane spans lie at 21–43 (AVYRLQAATVAAGILLVLYYRAT) and 53–73 (AAWLGMAAAELWFAVYWVITQ). Residues Asp-141 and Asp-446 contribute to the active site. The next 5 helical transmembrane spans lie at 523 to 543 (LWAANSLPTIYYVMIPALGLV), 546 to 566 (TPLFPEIMSPWATPFIYVFCV), 646 to 666 (PEFVIIATVALLNFVCLVAGL), 669 to 689 (IMAGVWNVFLPQVILCGLIVI), and 707 to 727 (IPLPVTLASIGFVMLAFLLPI).

The protein belongs to the glycosyltransferase 2 family. Plant cellulose synthase-like E subfamily.

It localises to the golgi apparatus membrane. Its function is as follows. Thought to be a Golgi-localized beta-glycan synthase that polymerize the backbones of noncellulosic polysaccharides (hemicelluloses) of plant cell wall. This chain is Cellulose synthase-like protein E6 (CSLE6), found in Oryza sativa subsp. japonica (Rice).